Consider the following 312-residue polypeptide: Flavonol 3-sulfotransferase (312 aa).

59–64 (KSGTTW) contacts 3'-phosphoadenylyl sulfate. His-119 serves as the catalytic Proton acceptor. 3'-phosphoadenylyl sulfate contacts are provided by residues Arg-141, Ser-149, Tyr-207, and 277–279 (RKG).

The protein belongs to the sulfotransferase 1 family. Highest in shoot tips and lowest in mature leaves and roots.

It is found in the cytoplasm. In terms of biological role, sulfotransferase that utilizes 3'-phospho-5'-adenylyl sulfate (PAPS) as sulfonate donor to catalyze the sulfate conjugation of quercetin, rhamnetin and isorhamnetin but not kaempferol. O-sulfation of position 3 of flavonol. May play a role in auxin transport. The protein is Flavonol 3-sulfotransferase of Flaveria bidentis (Coastal plain yellowtops).